The sequence spans 500 residues: Protein nucleotidyltransferase YdiU (500 aa).

ATP contacts are provided by glycine 96, glycine 98, arginine 99, lysine 119, aspartate 131, glycine 132, arginine 182, and arginine 189. Aspartate 258 (proton acceptor) is an active-site residue. Positions 259 and 268 each coordinate Mg(2+). Residue aspartate 268 coordinates ATP.

This sequence belongs to the SELO family. It depends on Mg(2+) as a cofactor. Mn(2+) serves as cofactor.

It catalyses the reaction L-seryl-[protein] + ATP = 3-O-(5'-adenylyl)-L-seryl-[protein] + diphosphate. The catalysed reaction is L-threonyl-[protein] + ATP = 3-O-(5'-adenylyl)-L-threonyl-[protein] + diphosphate. It carries out the reaction L-tyrosyl-[protein] + ATP = O-(5'-adenylyl)-L-tyrosyl-[protein] + diphosphate. The enzyme catalyses L-histidyl-[protein] + UTP = N(tele)-(5'-uridylyl)-L-histidyl-[protein] + diphosphate. It catalyses the reaction L-seryl-[protein] + UTP = O-(5'-uridylyl)-L-seryl-[protein] + diphosphate. The catalysed reaction is L-tyrosyl-[protein] + UTP = O-(5'-uridylyl)-L-tyrosyl-[protein] + diphosphate. In terms of biological role, nucleotidyltransferase involved in the post-translational modification of proteins. It can catalyze the addition of adenosine monophosphate (AMP) or uridine monophosphate (UMP) to a protein, resulting in modifications known as AMPylation and UMPylation. This chain is Protein nucleotidyltransferase YdiU, found in Rhizobium etli (strain ATCC 51251 / DSM 11541 / JCM 21823 / NBRC 15573 / CFN 42).